Reading from the N-terminus, the 594-residue chain is UvrABC system protein C (594 aa).

A GIY-YIG domain is found at 15–92; it reads DKPGCYQMKN…IQKFQPYYNI (78 aa). The 36-residue stretch at 197–232 folds into the UVR domain; that stretch reads AKIKQSLQTKMQKASEAMEFERAADIRDQIHYIEVT.

It belongs to the UvrC family. As to quaternary structure, interacts with UvrB in an incision complex.

The protein resides in the cytoplasm. In terms of biological role, the UvrABC repair system catalyzes the recognition and processing of DNA lesions. UvrC both incises the 5' and 3' sides of the lesion. The N-terminal half is responsible for the 3' incision and the C-terminal half is responsible for the 5' incision. This chain is UvrABC system protein C, found in Pediococcus pentosaceus (strain ATCC 25745 / CCUG 21536 / LMG 10740 / 183-1w).